The chain runs to 187 residues: Threonylcarbamoyl-AMP synthase (187 aa).

One can recognise a YrdC-like domain in the interval 4–187 (QSTIAAAITC…DAMNGKVFRG (184 aa)).

The protein belongs to the SUA5 family. TsaC subfamily.

The protein localises to the cytoplasm. It carries out the reaction L-threonine + hydrogencarbonate + ATP = L-threonylcarbamoyladenylate + diphosphate + H2O. Functionally, required for the formation of a threonylcarbamoyl group on adenosine at position 37 (t(6)A37) in tRNAs that read codons beginning with adenine. Catalyzes the conversion of L-threonine, HCO(3)(-)/CO(2) and ATP to give threonylcarbamoyl-AMP (TC-AMP) as the acyladenylate intermediate, with the release of diphosphate. This Pseudoalteromonas translucida (strain TAC 125) protein is Threonylcarbamoyl-AMP synthase.